Reading from the N-terminus, the 483-residue chain is Glutamyl-tRNA(Gln) amidotransferase subunit A (483 aa).

Catalysis depends on charge relay system residues Lys77 and Ser152. Residue Ser176 is the Acyl-ester intermediate of the active site.

This sequence belongs to the amidase family. GatA subfamily. In terms of assembly, heterotrimer of A, B and C subunits.

It catalyses the reaction L-glutamyl-tRNA(Gln) + L-glutamine + ATP + H2O = L-glutaminyl-tRNA(Gln) + L-glutamate + ADP + phosphate + H(+). In terms of biological role, allows the formation of correctly charged Gln-tRNA(Gln) through the transamidation of misacylated Glu-tRNA(Gln) in organisms which lack glutaminyl-tRNA synthetase. The reaction takes place in the presence of glutamine and ATP through an activated gamma-phospho-Glu-tRNA(Gln). This Listeria monocytogenes serotype 4a (strain HCC23) protein is Glutamyl-tRNA(Gln) amidotransferase subunit A.